Reading from the N-terminus, the 140-residue chain is Transcription antitermination protein NusB (140 aa).

This sequence belongs to the NusB family.

Its function is as follows. Involved in transcription antitermination. Required for transcription of ribosomal RNA (rRNA) genes. Binds specifically to the boxA antiterminator sequence of the ribosomal RNA (rrn) operons. This Pseudoalteromonas atlantica (strain T6c / ATCC BAA-1087) protein is Transcription antitermination protein NusB.